A 221-amino-acid chain; its full sequence is MVLTDIEYLLSYLEAHHVPTIKKKRHTYLTYHGLAEHYTYVLKDGIIKNSIILQDGREYNLSYIAKPDVISLLRDEVSRSTDQPFNVRIESEYATFYQVNRVAFWKYVNSTPELQNYVKNYYRKKLSENILRLQRMVMNGKKGAICAFIYSLVDLFGRKVNEGILIDFVVTNDDIAGFCGISSRSSVNRMLKELRTDGVITVKNHKFIIQDVSYLLDQIAN.

Residues 139-213 (NGKKGAICAF…NHKFIIQDVS (75 aa)) form the HTH crp-type domain. The segment at residues 172–192 (NDDIAGFCGISSRSSVNRMLK) is a DNA-binding region (H-T-H motif).

Multimerizes on DNA. Multimerization is required for transcription activation.

Its activity is regulated as follows. L-lactate acts as a positive effector on the binding and multimerization of LarR on DNA, while D-lactate antagonizes the positive effect of L-lactate. In terms of biological role, positive transcriptional regulator that is absolutely required for the expression of lactate racemase (Lar) activity. Controls Lar expression by sensing the L-/D-lactate ration. Binds to a 16-bp palindromic sequence (Lar box motif) that is present in the larR-larA intergenic region, allowing transcription of the larABCDE operon. This chain is Lactate racemization regulatory protein, found in Lactiplantibacillus plantarum (strain ATCC BAA-793 / NCIMB 8826 / WCFS1) (Lactobacillus plantarum).